Consider the following 397-residue polypeptide: Subtilisin-like protease 3 (397 aa).

Positions 1-19 (MGCIKVISVFLAAVAAVDA) are cleaved as a signal peptide. Positions 20–116 (RAFFHNRGGN…VEHDRVVKLA (97 aa)) are excised as a propeptide. The 82-residue stretch at 35–116 (SYIVVMKDGV…VEHDRVVKLA (82 aa)) folds into the Inhibitor I9 domain. One can recognise a Peptidase S8 domain in the interval 126–397 (TWGLGRVSHK…NKLLYNGSGR (272 aa)). Residues D158 and H189 each act as charge relay system in the active site. N250 is a glycosylation site (N-linked (GlcNAc...) asparagine). The active-site Charge relay system is the S344. Residue N393 is glycosylated (N-linked (GlcNAc...) asparagine).

This sequence belongs to the peptidase S8 family.

The protein resides in the secreted. Functionally, secreted subtilisin-like serine protease with keratinolytic activity that contributes to pathogenicity. The protein is Subtilisin-like protease 3 (SUB3) of Arthroderma otae (strain ATCC MYA-4605 / CBS 113480) (Microsporum canis).